A 423-amino-acid chain; its full sequence is Glucose-1-phosphate adenylyltransferase (423 aa).

Alpha-D-glucose 1-phosphate is bound by residues tyrosine 108, glycine 173, 188–189 (EK), and serine 207.

Belongs to the bacterial/plant glucose-1-phosphate adenylyltransferase family. In terms of assembly, homotetramer.

It carries out the reaction alpha-D-glucose 1-phosphate + ATP + H(+) = ADP-alpha-D-glucose + diphosphate. It participates in glycan biosynthesis; glycogen biosynthesis. Involved in the biosynthesis of ADP-glucose, a building block required for the elongation reactions to produce glycogen. Catalyzes the reaction between ATP and alpha-D-glucose 1-phosphate (G1P) to produce pyrophosphate and ADP-Glc. The polypeptide is Glucose-1-phosphate adenylyltransferase (Francisella tularensis subsp. holarctica (strain FTNF002-00 / FTA)).